The sequence spans 75 residues: Cytochrome c oxidase subunit 6C (75 aa).

Residues 1 to 13 (MASEVLAKPQMRG) lie on the Mitochondrial matrix side of the membrane. The helical transmembrane segment at 14-54 (LLARRLRIHMVGAFLISLGVAALYKFGVAEPRKKAYADFYK) threads the bilayer. Residues 55-75 (NYSPEKDFEEMKKAGVFRSIK) lie on the Mitochondrial intermembrane side of the membrane.

This sequence belongs to the cytochrome c oxidase subunit 6c family. In terms of assembly, component of the cytochrome c oxidase (complex IV, CIV), a multisubunit enzyme composed of 14 subunits. The complex is composed of a catalytic core of 3 subunits MT-CO1, MT-CO2 and MT-CO3, encoded in the mitochondrial DNA, and 11 supernumerary subunits COX4I, COX5A, COX5B, COX6A, COX6B, COX6C, COX7A, COX7B, COX7C, COX8 and NDUFA4, which are encoded in the nuclear genome. The complex exists as a monomer or a dimer and forms supercomplexes (SCs) in the inner mitochondrial membrane with NADH-ubiquinone oxidoreductase (complex I, CI) and ubiquinol-cytochrome c oxidoreductase (cytochrome b-c1 complex, complex III, CIII), resulting in different assemblies (supercomplex SCI(1)III(2)IV(1) and megacomplex MCI(2)III(2)IV(2)).

The protein resides in the mitochondrion inner membrane. It functions in the pathway energy metabolism; oxidative phosphorylation. Functionally, component of the cytochrome c oxidase, the last enzyme in the mitochondrial electron transport chain which drives oxidative phosphorylation. The respiratory chain contains 3 multisubunit complexes succinate dehydrogenase (complex II, CII), ubiquinol-cytochrome c oxidoreductase (cytochrome b-c1 complex, complex III, CIII) and cytochrome c oxidase (complex IV, CIV), that cooperate to transfer electrons derived from NADH and succinate to molecular oxygen, creating an electrochemical gradient over the inner membrane that drives transmembrane transport and the ATP synthase. Cytochrome c oxidase is the component of the respiratory chain that catalyzes the reduction of oxygen to water. Electrons originating from reduced cytochrome c in the intermembrane space (IMS) are transferred via the dinuclear copper A center (CU(A)) of subunit 2 and heme A of subunit 1 to the active site in subunit 1, a binuclear center (BNC) formed by heme A3 and copper B (CU(B)). The BNC reduces molecular oxygen to 2 water molecules using 4 electrons from cytochrome c in the IMS and 4 protons from the mitochondrial matrix. The polypeptide is Cytochrome c oxidase subunit 6C (COX6C) (Saimiri sciureus (Common squirrel monkey)).